A 185-amino-acid polypeptide reads, in one-letter code: Elongation factor P 1 (185 aa).

This sequence belongs to the elongation factor P family.

The protein resides in the cytoplasm. The protein operates within protein biosynthesis; polypeptide chain elongation. In terms of biological role, involved in peptide bond synthesis. Stimulates efficient translation and peptide-bond synthesis on native or reconstituted 70S ribosomes in vitro. Probably functions indirectly by altering the affinity of the ribosome for aminoacyl-tRNA, thus increasing their reactivity as acceptors for peptidyl transferase. This is Elongation factor P 1 (efp1) from Chlamydia trachomatis serovar D (strain ATCC VR-885 / DSM 19411 / UW-3/Cx).